The chain runs to 701 residues: Ubiquitin thioesterase zranb1-B (701 aa).

3 consecutive RanBP2-type zinc fingers follow at residues 3 to 33, 79 to 108, and 143 to 173; these read EDGI…PRPS, TSSK…QRRT, and IKGQ…PTPN. The Zn(2+) site is built by Cys10, Cys13, Cys24, Cys27, Cys85, Cys88, Cys99, and Cys102. Residues 108–121 show a composition bias toward polar residues; sequence TRSPTESPQSSGSG. The segment at 108–129 is disordered; it reads TRSPTESPQSSGSGLRSIPGPI. Zn(2+) contacts are provided by Cys150, Cys153, Cys164, and Cys167. The disordered stretch occupies residues 197-220; the sequence is RWRGGCSSSNSQRRSPPTSKRDSD. Polar residues predominate over residues 202–214; sequence CSSSNSQRRSPPT. ANK repeat units lie at residues 253 to 283 and 306 to 333; these read RKTD…SGGD and YTLV…QHAA. Residues 425–585 enclose the OTU domain; that stretch reads LYALWNRTAG…RGHFSALVAM (161 aa). The active-site Nucleophile is the Cys436. His578 serves as the catalytic Proton acceptor.

The protein belongs to the peptidase C64 family.

It localises to the cytoplasm. The protein resides in the nucleus. The enzyme catalyses Thiol-dependent hydrolysis of ester, thioester, amide, peptide and isopeptide bonds formed by the C-terminal Gly of ubiquitin (a 76-residue protein attached to proteins as an intracellular targeting signal).. In terms of biological role, ubiquitin thioesterase, which specifically hydrolyzes 'Lys-29'-linked and 'Lys-33'-linked diubiquitin. Also cleaves 'Lys-63'-linked chains, but with 40-fold less efficiency compared to 'Lys-29'-linked ones. Positive regulator of the Wnt signaling pathway that deubiquitinates apc protein, a negative regulator of Wnt-mediated transcription. Acts as a regulator of autophagy by mediating deubiquitination of pik3c3/vps34, thereby promoting autophagosome maturation. Plays a role in the regulation of cell morphology and cytoskeletal organization. Required in the stress fiber dynamics and cell migration. The chain is Ubiquitin thioesterase zranb1-B (zranb1-b) from Xenopus laevis (African clawed frog).